The chain runs to 72 residues: Translational regulator CsrA (72 aa).

The protein belongs to the CsrA/RsmA family. In terms of assembly, homodimer; the beta-strands of each monomer intercalate to form a hydrophobic core, while the alpha-helices form wings that extend away from the core.

It is found in the cytoplasm. A translational regulator that binds mRNA to regulate translation initiation and/or mRNA stability. Usually binds in the 5'-UTR at or near the Shine-Dalgarno sequence preventing ribosome-binding, thus repressing translation. Its main target seems to be the major flagellin gene, while its function is anatagonized by FliW. The sequence is that of Translational regulator CsrA from Lachnoclostridium phytofermentans (strain ATCC 700394 / DSM 18823 / ISDg) (Clostridium phytofermentans).